The following is an 88-amino-acid chain: MANTPSAKKAVNKIAKRTQVNKARRSRVRTFIRKFNDALAGGDKASAETAFRNCEPEIMRAVSKGVLHKNTAARKVSRLVKRLKAISA.

The disordered stretch occupies residues 1–22; it reads MANTPSAKKAVNKIAKRTQVNK.

Belongs to the bacterial ribosomal protein bS20 family.

Binds directly to 16S ribosomal RNA. The protein is Small ribosomal subunit protein bS20 of Bartonella bacilliformis (strain ATCC 35685 / KC583 / Herrer 020/F12,63).